We begin with the raw amino-acid sequence, 186 residues long: MLKTLVQLFLVVAGFAPGFGYDKYTTHIQNGNPYNLTVDMTPFIKINESYYVFGQTKVNWYVAYENCRRLQSELVTFETAEEFDAIAAFLNARGDRSEHWTSGNDLGKTGTHYWFSNAQLVTIKRWAPKQPDNAGGREHCIHLGYIYGYSTEFQLNDRPCHNHASSLFKYICEAPKQETVSIVVWK.

An N-terminal signal peptide occupies residues 1–20 (MLKTLVQLFLVVAGFAPGFG). N-linked (GlcNAc...) asparagine glycans are attached at residues N35 and N47. Residues 46 to 169 (INESYYVFGQ…CHNHASSLFK (124 aa)) form the C-type lectin domain. The cysteines at positions 140 and 160 are disulfide-linked.

It is found in the secreted. Its function is as follows. Galactose-specific lectin that displays calcium-dependent activity. Binds to the surface of hemocytes and enhances hemocyte encapsulation and melanization. This is likely by interacting with carbohydrates on the surface of the hemocytes. Also displays agglutination activity against the Gram-negative bacterium E.coli. The sequence is that of C-type lectin 37Da from Drosophila melanogaster (Fruit fly).